Here is a 356-residue protein sequence, read N- to C-terminus: Protein pelota homolog (356 aa).

Belongs to the eukaryotic release factor 1 family. Pelota subfamily. In terms of assembly, monomer. Requires a divalent metal cation as cofactor.

The protein resides in the cytoplasm. Functionally, may function in recognizing stalled ribosomes, interact with stem-loop structures in stalled mRNA molecules, and effect endonucleolytic cleavage of the mRNA. May play a role in the release non-functional ribosomes and degradation of damaged mRNAs. Has endoribonuclease activity. The sequence is that of Protein pelota homolog from Pyrococcus furiosus (strain ATCC 43587 / DSM 3638 / JCM 8422 / Vc1).